The sequence spans 190 residues: Large ribosomal subunit protein bL25 (190 aa).

It belongs to the bacterial ribosomal protein bL25 family. CTC subfamily. Part of the 50S ribosomal subunit; part of the 5S rRNA/L5/L18/L25 subcomplex. Contacts the 5S rRNA. Binds to the 5S rRNA independently of L5 and L18.

Its function is as follows. This is one of the proteins that binds to the 5S RNA in the ribosome where it forms part of the central protuberance. The protein is Large ribosomal subunit protein bL25 of Neisseria meningitidis serogroup A / serotype 4A (strain DSM 15465 / Z2491).